The sequence spans 1904 residues: Voltage-dependent calcium channel type A subunit alpha-1 (1904 aa).

Positions 1-45 (MLGGVGGRHMSTRRRGSSPLVRGGAGLTGYAGPGASGNSNDVAAI) are disordered. The span at 23-35 (GGAGLTGYAGPGA) shows a compositional bias: gly residues. Residues 30-168 (YAGPGASGNS…KHTRFIIEWP (139 aa)) lie on the Cytoplasmic side of the membrane. One copy of the I repeat lies at 155 to 447 (NCIRKHTRFI…LVLGVLSGEF (293 aa)). The helical transmembrane segment at 169–187 (PFEYAVLLTIIANCVVLAL) threads the bilayer. Residues 188-205 (EEHLPKQDKTILAQKLEA) are Extracellular-facing. The helical transmembrane segment at 206–225 (TEIYFLGIFCVEASLKILAL) threads the bilayer. The Cytoplasmic portion of the chain corresponds to 226-237 (GFVLHRGSYLRN). A helical transmembrane segment spans residues 238 to 259 (IWNIMDFFVVVTGFITAFSQGI). Residues 260-264 (ELDMD) are Extracellular-facing. A helical membrane pass occupies residues 265–283 (LRTLRAIRVLRPLKLVSGI). Over 284–302 (PSLQVVLKSIIKAMAPLLQ) the chain is Cytoplasmic. Residues 303-322 (IGLLVLFAIVIFAIIGLEFY) form a helical membrane-spanning segment. Residues 323–419 (SGTLHKTCYS…WTNDALGSTY (97 aa)) are Extracellular-facing. 2 N-linked (GlcNAc...) asparagine glycosylation sites follow: Asn-353 and Asn-367. The chain crosses the membrane as a helical span at residues 420–444 (NWIYFIPLIVLGSFFMLNLVLGVLS). The Cytoplasmic portion of the chain corresponds to 445 to 568 (GEFAKEREKV…YWIRKSVKSQ (124 aa)). The interval 513 to 543 (KKLGKSKSTDTEEEEGDDDQDDGELSSSTKE) is disordered. Acidic residues predominate over residues 523 to 536 (TEEEEGDDDQDDGE). An II repeat occupies 554 to 797 (EKRFRYWIRK…VFLAIAVDNL (244 aa)). A helical membrane pass occupies residues 569–587 (KFYWFVIVLVFFNTVCVAV). The Extracellular segment spans residues 588 to 602 (EHYGQPQWLTDFLYF). The chain crosses the membrane as a helical span at residues 603 to 622 (AEFVFLALFMLEMFIKVYAL). Residues 623–630 (GPRTYFDS) are Cytoplasmic-facing. A helical membrane pass occupies residues 631-649 (SFNRFDCVVISGSIFEVIW). Topologically, residues 650-658 (SEVKSGSFG) are extracellular. Residues 659–677 (LSVLRALRLLRIFKVTKYW) form a helical membrane-spanning segment. The Cytoplasmic portion of the chain corresponds to 678–696 (KSLRNLVISLLSSMRSIIS). Residues 697–716 (LLFLLFLFILIFALLGMQLF) form a helical membrane-spanning segment. At 717 to 769 (GGQFNFDSGTPPTNFNTFPIALLTVFQILTGEDWNEVMYQGIESQGGHKKGMI) the chain is on the extracellular side. Residues 770-794 (YSLYFIVLVLFGNYTLLNVFLAIAV) form a helical membrane-spanning segment. At 795-895 (DNLANAQELS…VRRAAHWVVN (101 aa)) the chain is on the cytoplasmic side. Residues 827–869 (QSLQNPKDGGAPKVEICPPNGKGGKQSSEEEKKQDEDDDTGPK) form a disordered region. An III repeat occupies 890–1177 (AHWVVNLRYF…IITFQEQGEA (288 aa)). A helical transmembrane segment spans residues 896-914 (LRYFDFFIMVVISLSSIAL). The Extracellular segment spans residues 915 to 930 (AAEDPVWEDSPRNEVL). A helical membrane pass occupies residues 931 to 950 (NYFDYAFTGVFTVEMILKII). The Cytoplasmic portion of the chain corresponds to 951–962 (DLGIILHPGSYL). Residues 963 to 981 (REFWNIMDAVVVICAAVSF) form a helical membrane-spanning segment. Residues 982–994 (AFDMTGSSAGQNL) lie on the Extracellular side of the membrane. The N-linked (GlcNAc...) asparagine glycan is linked to Asn-993. The helical transmembrane segment at 995 to 1013 (STIKSLRVLRVLRPLKTIK) threads the bilayer. At 1014-1032 (RVPKLKAVFDCVVNSLKNV) the chain is on the cytoplasmic side. Residues 1033–1052 (INILIVYILFQFIFAVIAVQ) form a helical membrane-spanning segment. Over 1053 to 1141 (LFNGKFFYCS…EDKGPIQNFR (89 aa)) the chain is Extracellular. The chain crosses the membrane as a helical span at residues 1142–1166 (IEMSIFYIVYFIVFPFFFVNIFVAL). Over 1167–1221 (IIITFQEQGEAELQDGEIDKNQKSCIDFTIQARPLERYMPKERNSVKYKIWRIVV) the chain is Cytoplasmic. The stretch at 1214–1470 (YKIWRIVVST…DNFDYLTRDS (257 aa)) is one IV repeat. The helical transmembrane segment at 1222–1250 (STPFEYFIMGLIVLNTVLLMMKFHRQSDA) threads the bilayer. Topologically, residues 1251–1255 (YKNTL) are extracellular. Residues 1256-1275 (KYMNMCFTGMFTVECILKIA) form a helical membrane-spanning segment. At 1276–1283 (AFGVRNFF) the chain is on the cytoplasmic side. The chain crosses the membrane as a helical span at residues 1284–1302 (KDAWNTFDFITVIGSIVDA). The Extracellular segment spans residues 1303–1309 (LVIEFGE). The chain crosses the membrane as a helical span at residues 1310 to 1328 (NFINVGFLRLFRAARLIKL). The Cytoplasmic segment spans residues 1329 to 1347 (LRQGYTIRILLWTFVQSFK). The helical transmembrane segment at 1348–1367 (ALPYVCLLIAMLFFIYAIIG) threads the bilayer. The Extracellular segment spans residues 1368-1431 (MQVFGNIALD…AKAGKQEGGC (64 aa)). The tract at residues 1430–1471 (GCGSNIAYAYFVSFIFFCSFLMLNLFVAVIMDNFDYLTRDSS) is phenylalkylamine binding. The helical transmembrane segment at 1432 to 1456 (GSNIAYAYFVSFIFFCSFLMLNLFV) threads the bilayer. The Cytoplasmic segment spans residues 1457–1904 (AVIMDNFDYL…HSDSDEDDWC (448 aa)). In terms of domain architecture, EF-hand spans 1476 to 1511 (HHLDEFVRIWAEYDPNATGKIHYTEMYDMLKNMDPP). Residues Asp-1489, Asn-1491, Thr-1493, Lys-1495, and Glu-1500 each contribute to the Ca(2+) site. Disordered regions lie at residues 1652–1694 (THTG…HEGP), 1710–1788 (THHP…HSYP), and 1870–1904 (GGRL…DDWC). Positions 1670-1681 (RSPSLRHSPGRP) are enriched in low complexity. Over residues 1682–1691 (GYDHHGHYYH) the composition is skewed to basic and acidic residues. A compositionally biased stretch (basic residues) spans 1710–1725 (THHPHPSQYNHRHRMR). Low complexity predominate over residues 1727-1740 (PWSASTSPARTPSP). Positions 1751-1762 (GTTSLEQRSRSP) are enriched in polar residues. A compositionally biased stretch (basic residues) spans 1771–1784 (PHTHQHYHRHHPHQ).

The protein belongs to the calcium channel alpha-1 subunit (TC 1.A.1.11) family. CACNA1I subfamily. As to quaternary structure, interacts with CATSPER1 and CATSPER2, leading to suppress T-type calcium channel activity.

It is found in the membrane. Voltage-sensitive calcium channels (VSCC) mediate the entry of calcium ions into excitable cells and are also involved in a variety of calcium-dependent processes, including muscle contraction, neurotransmitter release, gene expression, cell motility, cell division and cell death. The chain is Voltage-dependent calcium channel type A subunit alpha-1 (CAC) from Apis mellifera (Honeybee).